We begin with the raw amino-acid sequence, 382 residues long: Na(+)/H(+) antiporter NhaA (382 aa).

Helical transmembrane passes span 14-34 (AGGI…NSSL), 49-69 (MSVS…LIGL), 87-107 (IFPA…YVAF), 117-137 (GWAI…ALLG), 146-166 (VFLL…IAFF), 171-191 (LSVL…LLNA), 205-225 (FILW…GVVL), 252-272 (VAFA…LEGV), 285-305 (VALG…YLAV), 321-341 (IFAV…ISSL), and 356-376 (LGIL…LSIS).

This sequence belongs to the NhaA Na(+)/H(+) (TC 2.A.33) antiporter family.

The protein resides in the cell inner membrane. The catalysed reaction is Na(+)(in) + 2 H(+)(out) = Na(+)(out) + 2 H(+)(in). In terms of biological role, na(+)/H(+) antiporter that extrudes sodium in exchange for external protons. The polypeptide is Na(+)/H(+) antiporter NhaA (Aliivibrio fischeri (strain ATCC 700601 / ES114) (Vibrio fischeri)).